Consider the following 263-residue polypeptide: Proteasome subunit alpha type-1 (263 aa).

Residue Met-1 is modified to N-acetylmethionine. The residue at position 110 (Ser-110) is a Phosphoserine; alternate. Residue Ser-110 is glycosylated (O-linked (GlcNAc) serine; alternate). A Glycyl lysine isopeptide (Lys-Gly) (interchain with G-Cter in ubiquitin) cross-link involves residue Lys-115. Ser-177 bears the Phosphoserine mark. Residue Lys-208 forms a Glycyl lysine isopeptide (Lys-Gly) (interchain with G-Cter in ubiquitin) linkage. The segment at 232 to 263 (FLDGLEERPQRKAQPSQAADEPAEKADEPMEH) is disordered. Residues 253–263 (PAEKADEPMEH) show a composition bias toward basic and acidic residues.

Belongs to the peptidase T1A family. The 26S proteasome consists of a 20S proteasome core and two 19S regulatory subunits. The 20S proteasome core is a barrel-shaped complex made of 28 subunits that are arranged in four stacked rings. The two outer rings are each formed by seven alpha subunits, and the two inner rings are formed by seven beta subunits. The proteolytic activity is exerted by three beta-subunits PSMB5, PSMB6 and PSMB7. Interacts with NOTCH3. Interacts with ZFAND1. Post-translationally, proteolytically cleaved from a C-terminal extension in the course of the conversion of the proteasome from its latent form into its active form. Ubiquitous.

The protein localises to the cytoplasm. The protein resides in the nucleus. Functionally, component of the 20S core proteasome complex involved in the proteolytic degradation of most intracellular proteins. This complex plays numerous essential roles within the cell by associating with different regulatory particles. Associated with two 19S regulatory particles, forms the 26S proteasome and thus participates in the ATP-dependent degradation of ubiquitinated proteins. The 26S proteasome plays a key role in the maintenance of protein homeostasis by removing misfolded or damaged proteins that could impair cellular functions, and by removing proteins whose functions are no longer required. Associated with the PA200 or PA28, the 20S proteasome mediates ubiquitin-independent protein degradation. This type of proteolysis is required in several pathways including spermatogenesis (20S-PA200 complex) or generation of a subset of MHC class I-presented antigenic peptides (20S-PA28 complex). The sequence is that of Proteasome subunit alpha type-1 (Psma1) from Rattus norvegicus (Rat).